The primary structure comprises 248 residues: Small ribosomal subunit protein uS2 (248 aa).

Belongs to the universal ribosomal protein uS2 family.

The chain is Small ribosomal subunit protein uS2 from Dechloromonas aromatica (strain RCB).